Reading from the N-terminus, the 206-residue chain is LexA repressor (206 aa).

The H-T-H motif DNA-binding region spans 28 to 48 (RAEIATRLGFKSANAAEEHLK). Active-site for autocatalytic cleavage activity residues include serine 123 and lysine 160.

The protein belongs to the peptidase S24 family. In terms of assembly, homodimer.

It catalyses the reaction Hydrolysis of Ala-|-Gly bond in repressor LexA.. Represses a number of genes involved in the response to DNA damage (SOS response), including recA and lexA. In the presence of single-stranded DNA, RecA interacts with LexA causing an autocatalytic cleavage which disrupts the DNA-binding part of LexA, leading to derepression of the SOS regulon and eventually DNA repair. This is LexA repressor from Shewanella sp. (strain MR-4).